We begin with the raw amino-acid sequence, 24 residues long: Caerulein precursor fragment BM1 (24 aa).

In terms of tissue distribution, expressed by the skin glands.

The protein resides in the secreted. Functionally, antimicrobial peptide. This Xenopus boumbaensis (Mawa clawed frog) protein is Caerulein precursor fragment BM1.